A 929-amino-acid chain; its full sequence is Bifunctional glutamine synthetase adenylyltransferase/adenylyl-removing enzyme (929 aa).

The interval 1-422 (MTTPISTSRA…TRHFEQIFAV (422 aa)) is adenylyl removase. The tract at residues 429–929 (LGTFARIRPE…FQLWEDVFGT (501 aa)) is adenylyl transferase.

Belongs to the GlnE family. It depends on Mg(2+) as a cofactor.

It carries out the reaction [glutamine synthetase]-O(4)-(5'-adenylyl)-L-tyrosine + phosphate = [glutamine synthetase]-L-tyrosine + ADP. The catalysed reaction is [glutamine synthetase]-L-tyrosine + ATP = [glutamine synthetase]-O(4)-(5'-adenylyl)-L-tyrosine + diphosphate. Involved in the regulation of glutamine synthetase GlnA, a key enzyme in the process to assimilate ammonia. When cellular nitrogen levels are high, the C-terminal adenylyl transferase (AT) inactivates GlnA by covalent transfer of an adenylyl group from ATP to specific tyrosine residue of GlnA, thus reducing its activity. Conversely, when nitrogen levels are low, the N-terminal adenylyl removase (AR) activates GlnA by removing the adenylyl group by phosphorolysis, increasing its activity. The regulatory region of GlnE binds the signal transduction protein PII (GlnB) which indicates the nitrogen status of the cell. This Nitrosomonas eutropha (strain DSM 101675 / C91 / Nm57) protein is Bifunctional glutamine synthetase adenylyltransferase/adenylyl-removing enzyme.